The sequence spans 233 residues: Protein FAM204A (233 aa).

2 disordered regions span residues 1–57 (MWSG…PSTE) and 79–127 (KFQE…ETQW). Acidic residues predominate over residues 13-24 (SDVELNSDDDTT). The span at 34–46 (EGKEDGTFEKTEM) shows a compositional bias: basic and acidic residues. Residues 98-109 (EKKKRKRSRKGK) show a composition bias toward basic residues. Residues 144–164 (VKRKKVEKSGLEKRIDQAVEE) are a coiled coil.

This chain is Protein FAM204A (FAM204A), found in Bos taurus (Bovine).